A 475-amino-acid polypeptide reads, in one-letter code: Aspartyl/glutamyl-tRNA(Asn/Gln) amidotransferase subunit B (475 aa).

The protein belongs to the GatB/GatE family. GatB subfamily. Heterotrimer of A, B and C subunits.

It catalyses the reaction L-glutamyl-tRNA(Gln) + L-glutamine + ATP + H2O = L-glutaminyl-tRNA(Gln) + L-glutamate + ADP + phosphate + H(+). The catalysed reaction is L-aspartyl-tRNA(Asn) + L-glutamine + ATP + H2O = L-asparaginyl-tRNA(Asn) + L-glutamate + ADP + phosphate + 2 H(+). In terms of biological role, allows the formation of correctly charged Asn-tRNA(Asn) or Gln-tRNA(Gln) through the transamidation of misacylated Asp-tRNA(Asn) or Glu-tRNA(Gln) in organisms which lack either or both of asparaginyl-tRNA or glutaminyl-tRNA synthetases. The reaction takes place in the presence of glutamine and ATP through an activated phospho-Asp-tRNA(Asn) or phospho-Glu-tRNA(Gln). In Pediococcus pentosaceus (strain ATCC 25745 / CCUG 21536 / LMG 10740 / 183-1w), this protein is Aspartyl/glutamyl-tRNA(Asn/Gln) amidotransferase subunit B.